A 240-amino-acid chain; its full sequence is 4-hydroxy-tetrahydrodipicolinate reductase (240 aa).

Residues 79–81 (ATT) and 103–106 (SANM) contribute to the NAD(+) site. Histidine 135 acts as the Proton donor/acceptor in catalysis. A (S)-2,3,4,5-tetrahydrodipicolinate-binding site is contributed by histidine 136. Lysine 139 acts as the Proton donor in catalysis. 145–146 (GT) lines the (S)-2,3,4,5-tetrahydrodipicolinate pocket.

It belongs to the DapB family.

Its subcellular location is the cytoplasm. It carries out the reaction (S)-2,3,4,5-tetrahydrodipicolinate + NAD(+) + H2O = (2S,4S)-4-hydroxy-2,3,4,5-tetrahydrodipicolinate + NADH + H(+). It catalyses the reaction (S)-2,3,4,5-tetrahydrodipicolinate + NADP(+) + H2O = (2S,4S)-4-hydroxy-2,3,4,5-tetrahydrodipicolinate + NADPH + H(+). It functions in the pathway amino-acid biosynthesis; L-lysine biosynthesis via DAP pathway; (S)-tetrahydrodipicolinate from L-aspartate: step 4/4. In terms of biological role, catalyzes the conversion of 4-hydroxy-tetrahydrodipicolinate (HTPA) to tetrahydrodipicolinate. This chain is 4-hydroxy-tetrahydrodipicolinate reductase, found in Staphylococcus epidermidis (strain ATCC 12228 / FDA PCI 1200).